Consider the following 298-residue polypeptide: tRNA (guanine(9)-N1)-methyltransferase (298 aa).

Residues 1-10 (MSDTSENSNA) are compositionally biased toward polar residues. The interval 1 to 44 (MSDTSENSNAEIPADTSDVKDKPKPIVRAPQFPPPPEGISKSQW) is disordered. Residues 96–285 (PPKVNLNQSD…SVLPPRKLEV (190 aa)) form the SAM-dependent MTase TRM10-type domain. S-adenosyl-L-methionine contacts are provided by residues 192-193 (LT), Gly-212, 216-220 (DKNRH), Cys-224, Leu-238, and 250-252 (KVL). Asp-216 (proton acceptor) is an active-site residue.

It belongs to the class IV-like SAM-binding methyltransferase superfamily. TRM10 family. As to quaternary structure, monomer.

The protein localises to the cytoplasm. It localises to the nucleus. It carries out the reaction guanosine(9) in tRNA + S-adenosyl-L-methionine = N(1)-methylguanosine(9) in tRNA + S-adenosyl-L-homocysteine + H(+). Its function is as follows. S-adenosyl-L-methionine-dependent guanine N(1)-methyltransferase that catalyzes the formation of N(1)-methylguanine at position 9 (m1G9) in cytoplasmic tRNA. This chain is tRNA (guanine(9)-N1)-methyltransferase, found in Kluyveromyces lactis (strain ATCC 8585 / CBS 2359 / DSM 70799 / NBRC 1267 / NRRL Y-1140 / WM37) (Yeast).